A 217-amino-acid chain; its full sequence is Phosphoenolpyruvate guanylyltransferase (217 aa).

Positions 150, 165, and 168 each coordinate phosphoenolpyruvate.

Belongs to the CofC family.

It carries out the reaction phosphoenolpyruvate + GTP + H(+) = enolpyruvoyl-2-diphospho-5'-guanosine + diphosphate. Its pathway is cofactor biosynthesis; coenzyme F420 biosynthesis. Functionally, guanylyltransferase that catalyzes the activation of phosphoenolpyruvate (PEP) as enolpyruvoyl-2-diphospho-5'-guanosine, via the condensation of PEP with GTP. It is involved in the biosynthesis of coenzyme F420, a hydride carrier cofactor. This chain is Phosphoenolpyruvate guanylyltransferase, found in Mycobacterium marinum (strain ATCC BAA-535 / M).